A 663-amino-acid chain; its full sequence is Protein pat-12 (663 aa).

Polar residues predominate over residues 1–15; that stretch reads MTSHIATETSVNRWS. Disordered stretches follow at residues 1–78, 367–430, 517–546, and 597–663; these read MTSH…SGDY, RFEE…GQET, FRRG…DYRR, and PMPA…RRRR. Residues 367-380 show a composition bias toward basic and acidic residues; that stretch reads RFEETRRTEEVERR. Positions 381-400 are enriched in basic residues; the sequence is VQRREKKERRSRHHSSSRHH. The span at 517–526 shows a compositional bias: polar residues; the sequence is FRRGSQQQVS. Composition is skewed to basic and acidic residues over residues 620–640 and 649–663; these read FNKE…KPVD and NYKR…RRRR.

In terms of assembly, interacts with vab-10 (via plankin domain). In terms of tissue distribution, isoform a: Expressed in the uterus, the vulva, the rectum, mechanosensory neurons and in head and tail neurons. Isoform e: Expressed in spermatheca and weakly in the vulva. Isoform f: Expressed in spermatheca and weakly in the vulva. Isoform i: Expressed in spermatheca and weakly in the vulva.

It is found in the apical cell membrane. The protein resides in the basal cell membrane. Its subcellular location is the cytoplasm. It localises to the cell junction. The protein localises to the hemidesmosome. It is found in the cell membrane. The protein resides in the cytoskeleton. In terms of biological role, required for embryonic morphology and development. Plays both a functional and a structural role in the maintenance and probably biogenesis of fibrous organelles, a hemidesomosome-like junction structure, which ensures muscle stability and muscle connection to the external cuticle. The sequence is that of Protein pat-12 from Caenorhabditis elegans.